We begin with the raw amino-acid sequence, 536 residues long: E3 ubiquitin-protein ligase Godzilla (536 aa).

Positions 1–21 (MSKRSCQILTLLGLCLVCHEA) are cleaved as a signal peptide. Residues 22–174 (TLVGGHVLVY…DELPFNINTQ (153 aa)) are Extracellular-facing. The PA domain maps to 89–151 (FVALVARGEC…FVGHTTGKAL (63 aa)). N-linked (GlcNAc...) asparagine glycans are attached at residues Asn-109 and Asn-132. The helical transmembrane segment at 175 to 195 (LILPFSILIGMCFIIMVIYMI) threads the bilayer. At 196–536 (YKCIREQRRL…HSASDRQFLI (341 aa)) the chain is on the cytoplasmic side. The segment at 235 to 277 (CVICLEDFIEDDKLRVLPCSHPYHTHCIDPWLTENRRVCPICK) adopts an RING-type; atypical zinc-finger fold. 2 disordered regions span residues 287–334 (RASR…GAAG) and 350–372 (HGTFRRGHAGRNPFEESQSSDDE). The span at 307–334 (TPLLQQQQSNGRQVGQVSSASSAGGAAG) shows a compositional bias: low complexity.

This sequence belongs to the Godzilla family.

The protein localises to the endosome membrane. The catalysed reaction is S-ubiquitinyl-[E2 ubiquitin-conjugating enzyme]-L-cysteine + [acceptor protein]-L-lysine = [E2 ubiquitin-conjugating enzyme]-L-cysteine + N(6)-ubiquitinyl-[acceptor protein]-L-lysine.. The protein operates within protein modification; protein ubiquitination. Its function is as follows. Endosomal E3 ubiquitin-protein ligase that regulates the recycling endosome pathway by mediating ubiquitination of Synaptobrevin (Syb). Also acts as a regulator of transcytosis in wing imaginal disks by catalyzing ubiquitination of Syb: ubiquitination of Syb promotes transcytosis of wingless (wg) to the basolateral surface. This Drosophila melanogaster (Fruit fly) protein is E3 ubiquitin-protein ligase Godzilla.